The following is a 37-amino-acid chain: Large ribosomal subunit protein bL36 (37 aa).

This sequence belongs to the bacterial ribosomal protein bL36 family.

The chain is Large ribosomal subunit protein bL36 from Methylibium petroleiphilum (strain ATCC BAA-1232 / LMG 22953 / PM1).